We begin with the raw amino-acid sequence, 70 residues long: DNA gyrase inhibitor YacG (70 aa).

Residues cysteine 20, cysteine 23, cysteine 35, and cysteine 39 each coordinate Zn(2+).

This sequence belongs to the DNA gyrase inhibitor YacG family. As to quaternary structure, interacts with GyrB. Requires Zn(2+) as cofactor.

Its function is as follows. Inhibits all the catalytic activities of DNA gyrase by preventing its interaction with DNA. Acts by binding directly to the C-terminal domain of GyrB, which probably disrupts DNA binding by the gyrase. The chain is DNA gyrase inhibitor YacG from Rhizobium etli (strain CIAT 652).